A 356-amino-acid polypeptide reads, in one-letter code: Cdc42 effector protein 4 (356 aa).

Lys5 carries the post-translational modification N6-methyllysine. Ser18 is modified (phosphoserine). The CRIB domain maps to 27–41; the sequence is ISAPLGDFRHTMHVG. The tract at residues 51–102 is disordered; the sequence is SFLNSKAGEPDGESLDEQPSSSSSKRSLLSRKFRGSKRSQSVTRGEREQRDM. Ser64 carries the post-translational modification Phosphoserine. Residues 78–87 are compositionally biased toward basic residues; sequence LLSRKFRGSK. Phosphoserine occurs at positions 105, 109, and 118. Disordered regions lie at residues 122–182 and 257–356; these read LNEK…LDEQ and VAAP…EIRV. Residues 123–132 show a composition bias toward basic and acidic residues; it reads NEKEAAEKGT. A compositionally biased stretch (low complexity) spans 133 to 143; it reads SKLPKSLSSSP. 6 positions are modified to phosphoserine: Ser138, Ser140, Ser142, Ser174, Ser292, and Ser295. A compositionally biased stretch (low complexity) spans 287-315; the sequence is AAAAPSPGSARSMGSHTTRDSSSLSSCTS. Residues 318-344 show a composition bias toward basic and acidic residues; it reads LEERSPAFRGPDRARAAVSRQPDKEFS. The span at 345-356 shows a compositional bias: acidic residues; the sequence is FMDEEEEDEIRV.

It belongs to the BORG/CEP family. In terms of assembly, interacts with CDC42 and RHOQ, in a GTP-dependent manner. As to expression, not detected in any of the adult tissues tested. May be expressed only in fetal or embryonic tissues.

Its subcellular location is the endomembrane system. The protein localises to the cytoplasm. It localises to the cytoskeleton. Probably involved in the organization of the actin cytoskeleton. May act downstream of CDC42 to induce actin filament assembly leading to cell shape changes. Induces pseudopodia formation, when overexpressed in fibroblasts. The sequence is that of Cdc42 effector protein 4 (CDC42EP4) from Homo sapiens (Human).